Reading from the N-terminus, the 180-residue chain is Pyruvoyl-dependent arginine decarboxylase (180 aa).

Pyruvic acid (Ser) is present on Ser41.

The protein belongs to the PdaD family. Requires pyruvate as cofactor.

It catalyses the reaction L-arginine + H(+) = agmatine + CO2. This chain is Pyruvoyl-dependent arginine decarboxylase, found in Methanococcoides burtonii (strain DSM 6242 / NBRC 107633 / OCM 468 / ACE-M).